A 128-amino-acid polypeptide reads, in one-letter code: Large-conductance mechanosensitive channel (128 aa).

2 helical membrane passes run 10 to 30 and 76 to 96; these read FAMR…SAFG and GLFI…FMMI.

The protein belongs to the MscL family. As to quaternary structure, homopentamer.

It is found in the cell inner membrane. Functionally, channel that opens in response to stretch forces in the membrane lipid bilayer. May participate in the regulation of osmotic pressure changes within the cell. The sequence is that of Large-conductance mechanosensitive channel from Haemophilus influenzae (strain PittEE).